Consider the following 305-residue polypeptide: Probable lipid kinase YegS-like (305 aa).

The 129-residue stretch at 1-129 (MTQRRAMLIL…VDLGEVGGKL (129 aa)) folds into the DAGKc domain. ATP is bound by residues T39, 65-71 (GDGTLRD), and T92. The Mg(2+) site is built by L210, D213, and L215. E268 functions as the Proton acceptor in the catalytic mechanism.

It belongs to the diacylglycerol/lipid kinase family. YegS lipid kinase subfamily. It depends on Mg(2+) as a cofactor. Ca(2+) serves as cofactor.

The protein localises to the cytoplasm. In terms of biological role, probably phosphorylates lipids; the in vivo substrate is unknown. In Pseudomonas syringae pv. syringae (strain B728a), this protein is Probable lipid kinase YegS-like.